The following is a 309-amino-acid chain: D-alanine--D-alanine ligase (309 aa).

Residues 99–304 form the ATP-grasp domain; the sequence is KRVLLQAGIP…FPDLVQKIVD (206 aa). Residue 132–187 participates in ATP binding; it reads LKELGLPVVIKAPTQGSTIGTFIVREEGELEPAIAGALKYDLSFMAEAYLAGPEIT. Positions 258, 271, and 273 each coordinate Mg(2+).

This sequence belongs to the D-alanine--D-alanine ligase family. Mg(2+) serves as cofactor. It depends on Mn(2+) as a cofactor.

It localises to the cytoplasm. The catalysed reaction is 2 D-alanine + ATP = D-alanyl-D-alanine + ADP + phosphate + H(+). Its pathway is cell wall biogenesis; peptidoglycan biosynthesis. Cell wall formation. This chain is D-alanine--D-alanine ligase, found in Moorella thermoacetica (strain ATCC 39073 / JCM 9320).